A 1377-amino-acid polypeptide reads, in one-letter code: Pleckstrin homology-like domain family B member 1 (1377 aa).

Ser51 bears the Phosphoserine mark. The FHA domain occupies Thr64–Gly125. At Arg131 the chain carries Asymmetric dimethylarginine. Residues Arg150–Ser187 form a disordered region. Over residues Ser165–Arg178 the composition is skewed to polar residues. Phosphoserine is present on residues Ser192, Ser220, and Ser223. Disordered stretches follow at residues Ala211–Ser334 and Gly370–Ser535. Positions Ser252–Ser273 are enriched in low complexity. Residues Arg288–Pro303 show a composition bias toward polar residues. Residues Glu309–Pro322 are compositionally biased toward basic and acidic residues. A phosphoserine mark is found at Ser324, Ser334, Ser381, Ser404, Ser430, Ser443, Ser461, Ser470, Ser489, and Ser501. A compositionally biased stretch (low complexity) spans Glu456–Pro473. The span at Lys481–Arg491 shows a compositional bias: basic and acidic residues. Arg512 is subject to Omega-N-methylarginine. A phosphoserine mark is found at Ser518 and Ser520. The residue at position 522 (Thr522) is a Phosphothreonine. 7 positions are modified to phosphoserine: Ser533, Ser539, Ser551, Ser555, Ser563, Ser578, and Ser583. Positions Pro653–Arg663 are enriched in low complexity. Disordered stretches follow at residues Pro653–Thr707, Thr936–Pro1019, and Ser1119–Ser1138. The segment covering Glu677–Cys691 has biased composition (basic and acidic residues). Phosphoserine is present on Ser678. The stretch at Asp683–Glu809 forms a coiled coil. A phosphoserine mark is found at Ser971 and Ser1017. Low complexity predominate over residues Ser971–Ser992. Over residues Leu1009–Leu1018 the composition is skewed to polar residues. Residues Asp1144 to Glu1208 adopt a coiled-coil conformation. The PH domain occupies Ser1256–Glu1370.

The sequence is that of Pleckstrin homology-like domain family B member 1 (PHLDB1) from Homo sapiens (Human).